The sequence spans 127 residues: Small ribosomal subunit protein uS11 (127 aa).

Belongs to the universal ribosomal protein uS11 family. Part of the 30S ribosomal subunit. Interacts with proteins S7 and S18. Binds to IF-3.

Functionally, located on the platform of the 30S subunit, it bridges several disparate RNA helices of the 16S rRNA. Forms part of the Shine-Dalgarno cleft in the 70S ribosome. The sequence is that of Small ribosomal subunit protein uS11 from Prosthecochloris aestuarii (strain DSM 271 / SK 413).